The following is a 226-amino-acid chain: ATP synthase F(0) complex subunit a (226 aa).

6 helical membrane passes run 6–26 (FASFITPTLMGLPIVLLIIMF), 68–88 (WSLMLISLIMFIGSTNLLGLL), 97–117 (QLSMNLGMAIPLWAGAVITGF), 138–158 (IPMLIIIETISLFIQPMALAV), 164–184 (ITAGHLLMHLIGGATLVLTSI), and 189–209 (AILTFIILVLLTMLEFAVALI).

It belongs to the ATPase A chain family. Component of the ATP synthase complex composed at least of ATP5F1A/subunit alpha, ATP5F1B/subunit beta, ATP5MC1/subunit c (homooctomer), MT-ATP6/subunit a, MT-ATP8/subunit 8, ATP5ME/subunit e, ATP5MF/subunit f, ATP5MG/subunit g, ATP5MK/subunit k, ATP5MJ/subunit j, ATP5F1C/subunit gamma, ATP5F1D/subunit delta, ATP5F1E/subunit epsilon, ATP5PF/subunit F6, ATP5PB/subunit b, ATP5PD/subunit d, ATP5PO/subunit OSCP. ATP synthase complex consists of a soluble F(1) head domain (subunits alpha(3) and beta(3)) - the catalytic core - and a membrane F(0) domain - the membrane proton channel (subunits c, a, 8, e, f, g, k and j). These two domains are linked by a central stalk (subunits gamma, delta, and epsilon) rotating inside the F1 region and a stationary peripheral stalk (subunits F6, b, d, and OSCP). Interacts with DNAJC30; interaction is direct.

The protein localises to the mitochondrion inner membrane. The catalysed reaction is H(+)(in) = H(+)(out). Subunit a, of the mitochondrial membrane ATP synthase complex (F(1)F(0) ATP synthase or Complex V) that produces ATP from ADP in the presence of a proton gradient across the membrane which is generated by electron transport complexes of the respiratory chain. ATP synthase complex consist of a soluble F(1) head domain - the catalytic core - and a membrane F(1) domain - the membrane proton channel. These two domains are linked by a central stalk rotating inside the F(1) region and a stationary peripheral stalk. During catalysis, ATP synthesis in the catalytic domain of F(1) is coupled via a rotary mechanism of the central stalk subunits to proton translocation. With the subunit c (ATP5MC1), forms the proton-conducting channel in the F(0) domain, that contains two crucial half-channels (inlet and outlet) that facilitate proton movement from the mitochondrial intermembrane space (IMS) into the matrix. Protons are taken up via the inlet half-channel and released through the outlet half-channel, following a Grotthuss mechanism. The protein is ATP synthase F(0) complex subunit a of Ictidomys tridecemlineatus (Thirteen-lined ground squirrel).